The sequence spans 25 residues: Cytochrome c oxidase polypeptide VIIc (25 aa).

The tract at residues 1 to 25 (SHYSEGPGQNLPFSVQNKXRLLGMM) is disordered.

It belongs to the cytochrome c oxidase VIIc family. As to quaternary structure, component of the cytochrome c oxidase (complex IV, CIV), a multisubunit enzyme composed of 14 subunits. The complex is composed of a catalytic core of 3 subunits MT-CO1, MT-CO2 and MT-CO3, encoded in the mitochondrial DNA, and 11 supernumerary subunits COX4I, COX5A, COX5B, COX6A, COX6B, COX6C, COX7A, COX7B, COX7C, COX8 and NDUFA4, which are encoded in the nuclear genome. The complex exists as a monomer or a dimer and forms supercomplexes (SCs) in the inner mitochondrial membrane with NADH-ubiquinone oxidoreductase (complex I, CI) and ubiquinol-cytochrome c oxidoreductase (cytochrome b-c1 complex, complex III, CIII), resulting in different assemblies (supercomplex SCI(1)III(2)IV(1) and megacomplex MCI(2)III(2)IV(2)). Interacts with RAB5IF.

Its subcellular location is the mitochondrion inner membrane. The protein operates within energy metabolism; oxidative phosphorylation. In terms of biological role, component of the cytochrome c oxidase, the last enzyme in the mitochondrial electron transport chain which drives oxidative phosphorylation. The respiratory chain contains 3 multisubunit complexes succinate dehydrogenase (complex II, CII), ubiquinol-cytochrome c oxidoreductase (cytochrome b-c1 complex, complex III, CIII) and cytochrome c oxidase (complex IV, CIV), that cooperate to transfer electrons derived from NADH and succinate to molecular oxygen, creating an electrochemical gradient over the inner membrane that drives transmembrane transport and the ATP synthase. Cytochrome c oxidase is the component of the respiratory chain that catalyzes the reduction of oxygen to water. Electrons originating from reduced cytochrome c in the intermembrane space (IMS) are transferred via the dinuclear copper A center (CU(A)) of subunit 2 and heme A of subunit 1 to the active site in subunit 1, a binuclear center (BNC) formed by heme A3 and copper B (CU(B)). The BNC reduces molecular oxygen to 2 water molecules using 4 electrons from cytochrome c in the IMS and 4 protons from the mitochondrial matrix. This Oncorhynchus mykiss (Rainbow trout) protein is Cytochrome c oxidase polypeptide VIIc.